A 269-amino-acid polypeptide reads, in one-letter code: Eukaryotic translation initiation factor 3 subunit G-1 (269 aa).

Positions 188–266 (AAIRISNLSE…LILSVEWSKP (79 aa)) constitute an RRM domain.

The protein belongs to the eIF-3 subunit G family. In terms of assembly, component of the eukaryotic translation initiation factor 3 (eIF-3) complex. The eIF-3 complex interacts with pix.

It is found in the cytoplasm. Functionally, RNA-binding component of the eukaryotic translation initiation factor 3 (eIF-3) complex, which is involved in protein synthesis of a specialized repertoire of mRNAs and, together with other initiation factors, stimulates binding of mRNA and methionyl-tRNAi to the 40S ribosome. The eIF-3 complex specifically targets and initiates translation of a subset of mRNAs involved in cell proliferation. This subunit can bind 18S rRNA. This is Eukaryotic translation initiation factor 3 subunit G-1 from Drosophila sechellia (Fruit fly).